We begin with the raw amino-acid sequence, 89 residues long: Small ribosomal subunit protein uS15 (89 aa).

Belongs to the universal ribosomal protein uS15 family. Part of the 30S ribosomal subunit. Forms a bridge to the 50S subunit in the 70S ribosome, contacting the 23S rRNA.

Its function is as follows. One of the primary rRNA binding proteins, it binds directly to 16S rRNA where it helps nucleate assembly of the platform of the 30S subunit by binding and bridging several RNA helices of the 16S rRNA. In terms of biological role, forms an intersubunit bridge (bridge B4) with the 23S rRNA of the 50S subunit in the ribosome. The sequence is that of Small ribosomal subunit protein uS15 from Vibrio atlanticus (strain LGP32) (Vibrio splendidus (strain Mel32)).